The sequence spans 446 residues: NADH oxidase (446 aa).

FAD contacts are provided by residues 7–11 (GCTHA), glutamate 32, cysteine 42, valine 79, 110–113 (TTGS), lysine 132, and tyrosine 157. Catalysis depends on histidine 10, which acts as the Proton acceptor. Cysteine 42 acts as the Redox-active in catalysis. A Cysteine sulfinic acid (-SO2H) modification is found at cysteine 42. Residues 150-165 (VVVV…LVEA), aspartate 177, tyrosine 186, and glycine 243 contribute to the NAD(+) site. FAD-binding positions include 271-281 (TSNPDIFAAGD), leucine 298, alanine 299, and threonine 300. Glycine 328 provides a ligand contact to NAD(+). FAD is bound at residue phenylalanine 424.

It belongs to the class-III pyridine nucleotide-disulfide oxidoreductase family. In terms of assembly, homodimer. FAD serves as cofactor. In terms of processing, the N-terminus is blocked.

It catalyses the reaction 2 NADH + O2 + 2 H(+) = 2 NAD(+) + 2 H2O. Functionally, catalyzes the four-electron reduction of molecular oxygen to water. The chain is NADH oxidase (nox) from Enterococcus faecalis (strain ATCC 700802 / V583).